Reading from the N-terminus, the 328-residue chain is Delta(3,5)-Delta(2,4)-dienoyl-CoA isomerase, mitochondrial (328 aa).

The transit peptide at 1–26 (MAAGIVASRRLRDLLTRRLTASNYPG) directs the protein to the mitochondrion. Substrate contacts are provided by residues 116-120 (AGVDL) and glycine 174. Lysine 231 carries the post-translational modification N6-succinyllysine. Serine 268 bears the Phosphoserine mark. The Microbody targeting signal motif lies at 326–328 (SKL). At lysine 327 the chain carries N6-acetyllysine.

Belongs to the enoyl-CoA hydratase/isomerase family. Homohexamer.

Its subcellular location is the mitochondrion. It is found in the peroxisome. The catalysed reaction is (3E,5Z)-octadienoyl-CoA = (2E,4E)-octadienoyl-CoA. It catalyses the reaction (3E,5Z,8Z,11Z,14Z)-eicosapentaenoyl-CoA = (2E,4E,8Z,11Z,14Z)-eicosapentaenoyl-CoA. It functions in the pathway lipid metabolism; fatty acid beta-oxidation. Its function is as follows. Isomerization of 3-trans,5-cis-dienoyl-CoA to 2-trans,4-trans-dienoyl-CoA. The protein is Delta(3,5)-Delta(2,4)-dienoyl-CoA isomerase, mitochondrial (ECH1) of Pongo abelii (Sumatran orangutan).